The following is a 434-amino-acid chain: Nicotinate phosphoribosyltransferase (434 aa).

Residue His242 is modified to Phosphohistidine; by autocatalysis.

The protein belongs to the NAPRTase family. Post-translationally, transiently phosphorylated on a His residue during the reaction cycle. Phosphorylation strongly increases the affinity for substrates and increases the rate of nicotinate D-ribonucleotide production. Dephosphorylation regenerates the low-affinity form of the enzyme, leading to product release.

The catalysed reaction is nicotinate + 5-phospho-alpha-D-ribose 1-diphosphate + ATP + H2O = nicotinate beta-D-ribonucleotide + ADP + phosphate + diphosphate. The protein operates within cofactor biosynthesis; NAD(+) biosynthesis; nicotinate D-ribonucleotide from nicotinate: step 1/1. Catalyzes the synthesis of beta-nicotinate D-ribonucleotide from nicotinate and 5-phospho-D-ribose 1-phosphate at the expense of ATP. This Chelativorans sp. (strain BNC1) protein is Nicotinate phosphoribosyltransferase.